The primary structure comprises 204 residues: Tetraspanin-13 (204 aa).

Residues 1 to 19 lie on the Cytoplasmic side of the membrane; it reads MVCGGFSCSKNCLCALNLL. A helical transmembrane segment spans residues 20-40; it reads YTLVSLLLIGIAAWGIGFGLI. The Extracellular portion of the chain corresponds to 41–44; that stretch reads SSLR. A helical transmembrane segment spans residues 45 to 65; it reads VVGVVIAVGIFLFLIALVGLI. Over 66-72 the chain is Cytoplasmic; sequence GAVKHHQ. The helical transmembrane segment at 73-93 threads the bilayer; it reads VLLFFYMIILLLVFIVQFSVS. Residues 94 to 167 are Extracellular-facing; sequence CACLALNREQ…IGEYAGEVLR (74 aa). Residues Asn-113 and Asn-137 are each glycosylated (N-linked (GlcNAc...) asparagine). Ser-143 bears the Phosphoserine mark. The chain crosses the membrane as a helical span at residues 168-188; sequence FVGGIGLFFSFTEILGVWLTY. At 189–204 the chain is on the cytoplasmic side; it reads RYRNQKDPRANPSAFL.

This sequence belongs to the tetraspanin (TM4SF) family.

Its subcellular location is the membrane. The polypeptide is Tetraspanin-13 (Tspan13) (Rattus norvegicus (Rat)).